Here is a 150-residue protein sequence, read N- to C-terminus: UPF0756 membrane protein Dd1591_2981 (150 aa).

Transmembrane regions (helical) follow at residues I10–F32, Y51–G71, L88–M108, and A127–I147.

Belongs to the UPF0756 family.

The protein resides in the cell membrane. The sequence is that of UPF0756 membrane protein Dd1591_2981 from Dickeya chrysanthemi (strain Ech1591) (Dickeya zeae (strain Ech1591)).